Consider the following 521-residue polypeptide: NAD(P)H-quinone oxidoreductase subunit 2 (521 aa).

Transmembrane regions (helical) follow at residues 14 to 34 (VILP…TDLI), 42 to 62 (LTPA…TLQW), 79 to 99 (LSIV…LLSI), 109 to 129 (LGEF…LSGA), 132 to 152 (LVTI…LTGY), 167 to 187 (LLIG…LYGL), 207 to 227 (LALL…ISAV), 241 to 261 (PTPI…ALAI), 275 to 295 (WHFV…VVAL), 303 to 323 (LLAY…IAGT), 331 to 351 (VYYL…VILF), 375 to 395 (LGLS…GFFG), 397 to 417 (LYLF…LALI), and 463 to 483 (AGLV…NPLF).

Belongs to the complex I subunit 2 family. In terms of assembly, NDH-1 can be composed of about 15 different subunits; different subcomplexes with different compositions have been identified which probably have different functions.

Its subcellular location is the cellular thylakoid membrane. It carries out the reaction a plastoquinone + NADH + (n+1) H(+)(in) = a plastoquinol + NAD(+) + n H(+)(out). The enzyme catalyses a plastoquinone + NADPH + (n+1) H(+)(in) = a plastoquinol + NADP(+) + n H(+)(out). In terms of biological role, NDH-1 shuttles electrons from an unknown electron donor, via FMN and iron-sulfur (Fe-S) centers, to quinones in the respiratory and/or the photosynthetic chain. The immediate electron acceptor for the enzyme in this species is believed to be plastoquinone. Couples the redox reaction to proton translocation, and thus conserves the redox energy in a proton gradient. Cyanobacterial NDH-1 also plays a role in inorganic carbon-concentration. This Synechococcus elongatus (strain ATCC 33912 / PCC 7942 / FACHB-805) (Anacystis nidulans R2) protein is NAD(P)H-quinone oxidoreductase subunit 2.